Here is a 144-residue protein sequence, read N- to C-terminus: Maximins 7/H1 (144 aa).

The first 18 residues, Met-1–Ala-18, serve as a signal peptide directing secretion. A propeptide spanning residues Arg-19–Arg-43 is cleaved from the precursor. Asn-70 bears the Asparagine amide mark. A propeptide spanning residues Thr-74–Arg-123 is cleaved from the precursor. At Leu-143 the chain carries Leucine amide.

Belongs to the bombinin family. In terms of tissue distribution, expressed by the skin glands.

It localises to the secreted. In terms of biological role, maximin-7 shows antimicrobial activity against bacteria and against the fungus C.albicans. It has little hemolytic activity. Maximin-H1 shows antibacterial activity against both Gram-positive and Gram-negative bacteria. It also shows antimicrobial activity against the fungus C.albicans. Shows strong hemolytic activity. This Bombina maxima (Giant fire-bellied toad) protein is Maximins 7/H1.